We begin with the raw amino-acid sequence, 61 residues long: Probradykinin-2 (61 aa).

Positions 1–22 (MSFLKKSLFLVLFLGLVSFSIC) are cleaved as a signal peptide. The propeptide occupies 23–50 (EEEKRETEEEENEDEIEEQSEEKKRFEP). Positions 24 to 61 (EEKRETEEEENEDEIEEQSEEKKRFEPVPPGFTPFRQT) are disordered. The span at 30 to 42 (EEEENEDEIEEQS) shows a compositional bias: acidic residues. 4-hydroxyproline is present on Pro52.

This sequence belongs to the frog skin active peptide (FSAP) family. Bradykinin-related peptide subfamily. Expressed by the skin glands.

It is found in the secreted. In terms of biological role, may produce in vitro relaxation of rat arterial smooth muscle and constriction of intestinal smooth muscle. May target bradykinin receptors (BDKRB). The chain is Probradykinin-2 from Pithecopus azureus (Orange-legged monkey tree frog).